The chain runs to 266 residues: Imidazole glycerol phosphate synthase subunit HisF (266 aa).

Residues Asp11 and Asp130 contribute to the active site.

This sequence belongs to the HisA/HisF family. In terms of assembly, heterodimer of HisH and HisF.

Its subcellular location is the cytoplasm. The enzyme catalyses 5-[(5-phospho-1-deoxy-D-ribulos-1-ylimino)methylamino]-1-(5-phospho-beta-D-ribosyl)imidazole-4-carboxamide + L-glutamine = D-erythro-1-(imidazol-4-yl)glycerol 3-phosphate + 5-amino-1-(5-phospho-beta-D-ribosyl)imidazole-4-carboxamide + L-glutamate + H(+). The protein operates within amino-acid biosynthesis; L-histidine biosynthesis; L-histidine from 5-phospho-alpha-D-ribose 1-diphosphate: step 5/9. IGPS catalyzes the conversion of PRFAR and glutamine to IGP, AICAR and glutamate. The HisF subunit catalyzes the cyclization activity that produces IGP and AICAR from PRFAR using the ammonia provided by the HisH subunit. The polypeptide is Imidazole glycerol phosphate synthase subunit HisF (Albidiferax ferrireducens (strain ATCC BAA-621 / DSM 15236 / T118) (Rhodoferax ferrireducens)).